We begin with the raw amino-acid sequence, 305 residues long: Phosphoribosylaminoimidazole-succinocarboxamide synthase (305 aa).

It belongs to the SAICAR synthetase family.

It carries out the reaction 5-amino-1-(5-phospho-D-ribosyl)imidazole-4-carboxylate + L-aspartate + ATP = (2S)-2-[5-amino-1-(5-phospho-beta-D-ribosyl)imidazole-4-carboxamido]succinate + ADP + phosphate + 2 H(+). It participates in purine metabolism; IMP biosynthesis via de novo pathway; 5-amino-1-(5-phospho-D-ribosyl)imidazole-4-carboxamide from 5-amino-1-(5-phospho-D-ribosyl)imidazole-4-carboxylate: step 1/2. The protein is Phosphoribosylaminoimidazole-succinocarboxamide synthase of Albidiferax ferrireducens (strain ATCC BAA-621 / DSM 15236 / T118) (Rhodoferax ferrireducens).